We begin with the raw amino-acid sequence, 420 residues long: Nucleobindin-2 (420 aa).

An N-terminal signal peptide occupies residues 1–24 (MRWRTIQARYCFLLVPCVLTALEA). A DNA-binding region spans residues 171–223 (RTRHEEFKKYEMMKEHERREYLKTLSEEKRKEEEAKFAEMKRKHEDHPKVNHP). The segment at 194–225 (TLSEEKRKEEEAKFAEMKRKHEDHPKVNHPGS) is disordered. Positions 213–420 (KHEDHPKVNH…AGELKFEPHT (208 aa)) are binds to necdin. EF-hand domains are found at residues 241-276 (PNDF…ELDK) and 293-328 (ERLR…KEFL). Ca(2+) contacts are provided by Asp-254, Asn-256, Asp-258, Glu-265, Asp-306, Asn-308, Asp-310, and Glu-317. The short motif at 304–334 (EIDNNKDRLVTLEEFLRATEKKEFLEPDSWE) is the GBA element. The residue at position 332 (Ser-332) is a Phosphoserine. The segment covering 366–386 (DELQKQKEELQRQHDHLEAQK) has biased composition (basic and acidic residues). A disordered region spans residues 366–420 (DELQKQKEELQRQHDHLEAQKQEYQQAVQQLEQKKFQQGIAPSGPAGELKFEPHT). Residues 387–396 (QEYQQAVQQL) are compositionally biased toward low complexity.

This sequence belongs to the nucleobindin family. As to quaternary structure, interacts (via GBA motif) with guanine nucleotide-binding protein G(i) alpha subunit GNAI3. Preferentially interacts with inactive rather than active GNAI3. Interaction with GNAI3 is inhibited when NUCB2 binds calcium, probably due to a conformational change which renders the GBA motif inaccessible. Binds to the postmitotic growth suppressor NDN; coexpression abolishes NUCB2 secretion. Interacts with MC4R.

It is found in the golgi apparatus. It localises to the endoplasmic reticulum. The protein localises to the nucleus envelope. The protein resides in the membrane. Its subcellular location is the cytoplasm. It is found in the secreted. Calcium-binding protein which may have a role in calcium homeostasis. Acts as a non-receptor guanine nucleotide exchange factor which binds to and activates guanine nucleotide-binding protein (G-protein) alpha subunit GNAI3. Its function is as follows. Anorexigenic peptide, seems to play an important role in hypothalamic pathways regulating food intake and energy homeostasis, acting in a leptin-independent manner. May also exert hypertensive roles and modulate blood pressure through directly acting on peripheral arterial resistance. In intestinal epithelial cells, plays a role in the inhibition of hepatic glucose production via MC4R receptor leading to increased cyclic adenosine monophosphate (cAMP) levels and glucagon-like peptide 1 (GLP-1) secretion. This Rattus norvegicus (Rat) protein is Nucleobindin-2 (Nucb2).